The primary structure comprises 203 residues: Nucleoside triphosphate pyrophosphatase (203 aa).

Asp77 (proton acceptor) is an active-site residue.

Belongs to the Maf family. The cofactor is a divalent metal cation.

It is found in the cytoplasm. It catalyses the reaction a ribonucleoside 5'-triphosphate + H2O = a ribonucleoside 5'-phosphate + diphosphate + H(+). It carries out the reaction a 2'-deoxyribonucleoside 5'-triphosphate + H2O = a 2'-deoxyribonucleoside 5'-phosphate + diphosphate + H(+). Functionally, nucleoside triphosphate pyrophosphatase. May have a dual role in cell division arrest and in preventing the incorporation of modified nucleotides into cellular nucleic acids. The polypeptide is Nucleoside triphosphate pyrophosphatase (Rickettsia felis (strain ATCC VR-1525 / URRWXCal2) (Rickettsia azadi)).